We begin with the raw amino-acid sequence, 81 residues long: Insulin-like growth factor 1 (81 aa).

Positions 1–4 (FASA) are excised as a propeptide. A b region spans residues 5-33 (GPETLCGAELVDALQFVCGDRGFYFNKPT). 3 disulfide bridges follow: Cys-10–Cys-52, Cys-22–Cys-65, and Cys-51–Cys-56. The segment at 34-45 (GYGSSSRRAPQT) is c. Residues 46 to 66 (GIVDECCFRSCDLRRLEMYCA) form an a region. A d region spans residues 67–74 (PLKPAKAA). The propeptide at 75–81 (RSVRAQR) is e peptide.

The protein belongs to the insulin family. As to quaternary structure, forms a ternary complex with IGFR1 and ITGAV:ITGB3. Forms a ternary complex with IGFR1 and ITGA6:ITGB4.

It is found in the secreted. In terms of biological role, the insulin-like growth factors, isolated from plasma, are structurally and functionally related to insulin but have a much higher growth-promoting activity. May be a physiological regulator of [1-14C]-2-deoxy-D-glucose (2DG) transport and glycogen synthesis in osteoblasts. Stimulates glucose transport in bone-derived osteoblastic (PyMS) cells and is effective at much lower concentrations than insulin, not only regarding glycogen and DNA synthesis but also with regard to enhancing glucose uptake. May play a role in synapse maturation. Ca(2+)-dependent exocytosis of IGF1 is required for sensory perception of smell in the olfactory bulb. Acts as a ligand for IGF1R. Binds to the alpha subunit of IGF1R, leading to the activation of the intrinsic tyrosine kinase activity which autophosphorylates tyrosine residues in the beta subunit thus initiating a cascade of down-stream signaling events leading to activation of the PI3K-AKT/PKB and the Ras-MAPK pathways. Binds to integrins ITGAV:ITGB3 and ITGA6:ITGB4. Its binding to integrins and subsequent ternary complex formation with integrins and IGFR1 are essential for IGF1 signaling. Induces the phosphorylation and activation of IGFR1, MAPK3/ERK1, MAPK1/ERK2 and AKT1. As part of the MAPK/ERK signaling pathway, acts as a negative regulator of apoptosis in cardiomyocytes via promotion of STUB1/CHIP-mediated ubiquitination and degradation of ICER-type isoforms of CREM. The chain is Insulin-like growth factor 1 from Suncus murinus (Asian house shrew).